A 239-amino-acid polypeptide reads, in one-letter code: Small ribosomal subunit protein uS3 (239 aa).

One can recognise a KH type-2 domain in the interval 38 to 106 (IRELIEERFK…KTFVNVVEIK (69 aa)).

The protein belongs to the universal ribosomal protein uS3 family. In terms of assembly, part of the 30S ribosomal subunit. Forms a tight complex with proteins S10 and S14.

In terms of biological role, binds the lower part of the 30S subunit head. Binds mRNA in the 70S ribosome, positioning it for translation. In Elusimicrobium minutum (strain Pei191), this protein is Small ribosomal subunit protein uS3.